Reading from the N-terminus, the 214-residue chain is Mexicain (214 aa).

Cystine bridges form between cysteine 22–cysteine 63, cysteine 56–cysteine 95, and cysteine 153–cysteine 200. Cysteine 25 is a catalytic residue. E64 is bound at residue cysteine 25. Active-site residues include histidine 159 and asparagine 175.

Belongs to the peptidase C1 family. In terms of tissue distribution, expressed in latex.

The protein resides in the secreted. Its function is as follows. Cysteine protease. This chain is Mexicain, found in Jacaratia mexicana (Wild papaya).